Consider the following 74-residue polypeptide: ATP synthase subunit c (74 aa).

The next 2 helical transmembrane spans lie at 8–28 and 52–72; these read FIGI…VSNI and IGAG…MLLI.

It belongs to the ATPase C chain family. As to quaternary structure, F-type ATPases have 2 components, F(1) - the catalytic core - and F(0) - the membrane proton channel. F(1) has five subunits: alpha(3), beta(3), gamma(1), delta(1), epsilon(1). F(0) has three main subunits: a(1), b(2) and c(10-14). The alpha and beta chains form an alternating ring which encloses part of the gamma chain. F(1) is attached to F(0) by a central stalk formed by the gamma and epsilon chains, while a peripheral stalk is formed by the delta and b chains.

The protein resides in the cell inner membrane. F(1)F(0) ATP synthase produces ATP from ADP in the presence of a proton or sodium gradient. F-type ATPases consist of two structural domains, F(1) containing the extramembraneous catalytic core and F(0) containing the membrane proton channel, linked together by a central stalk and a peripheral stalk. During catalysis, ATP synthesis in the catalytic domain of F(1) is coupled via a rotary mechanism of the central stalk subunits to proton translocation. Its function is as follows. Key component of the F(0) channel; it plays a direct role in translocation across the membrane. A homomeric c-ring of between 10-14 subunits forms the central stalk rotor element with the F(1) delta and epsilon subunits. The polypeptide is ATP synthase subunit c (Rickettsia prowazekii (strain Madrid E)).